Reading from the N-terminus, the 331-residue chain is Transcriptional adapter 1 (331 aa).

Belongs to the TADA1 family.

It is found in the nucleus. Its function is as follows. Probably involved in transcriptional regulation. This Xenopus tropicalis (Western clawed frog) protein is Transcriptional adapter 1 (tada1).